A 195-amino-acid chain; its full sequence is dITP/XTP pyrophosphatase (195 aa).

Position 8–13 (8–13 (TNNQGK)) interacts with substrate. Mg(2+)-binding residues include Glu39 and Asp68. The Proton acceptor role is filled by Asp68. Residues Ser69, 149–152 (FGYD), Lys172, and 177–178 (HR) each bind substrate.

The protein belongs to the HAM1 NTPase family. In terms of assembly, homodimer. It depends on Mg(2+) as a cofactor.

The catalysed reaction is XTP + H2O = XMP + diphosphate + H(+). It carries out the reaction dITP + H2O = dIMP + diphosphate + H(+). It catalyses the reaction ITP + H2O = IMP + diphosphate + H(+). Functionally, pyrophosphatase that catalyzes the hydrolysis of nucleoside triphosphates to their monophosphate derivatives, with a high preference for the non-canonical purine nucleotides XTP (xanthosine triphosphate), dITP (deoxyinosine triphosphate) and ITP. Seems to function as a house-cleaning enzyme that removes non-canonical purine nucleotides from the nucleotide pool, thus preventing their incorporation into DNA/RNA and avoiding chromosomal lesions. In Staphylococcus epidermidis (strain ATCC 35984 / DSM 28319 / BCRC 17069 / CCUG 31568 / BM 3577 / RP62A), this protein is dITP/XTP pyrophosphatase.